Consider the following 334-residue polypeptide: Uroporphyrinogen decarboxylase (334 aa).

Residues 22-26 (RQVGR), Asp-71, Tyr-140, Ser-195, and His-310 each bind substrate.

The protein belongs to the uroporphyrinogen decarboxylase family. In terms of assembly, homodimer.

Its subcellular location is the cytoplasm. It catalyses the reaction uroporphyrinogen III + 4 H(+) = coproporphyrinogen III + 4 CO2. It functions in the pathway porphyrin-containing compound metabolism; protoporphyrin-IX biosynthesis; coproporphyrinogen-III from 5-aminolevulinate: step 4/4. In terms of biological role, catalyzes the decarboxylation of four acetate groups of uroporphyrinogen-III to yield coproporphyrinogen-III. The chain is Uroporphyrinogen decarboxylase from Chlamydia muridarum (strain MoPn / Nigg).